A 510-amino-acid chain; its full sequence is Solute carrier family 2, facilitated glucose transporter member 2 (510 aa).

Residues 1-10 lie on the Cytoplasmic side of the membrane; the sequence is MTEDKVTGTL. Residues 11-31 traverse the membrane as a helical segment; it reads VLAVFTAVLSSFQFGYDIGVI. At 32–96 the chain is on the extracellular side; it reads NAPQQVIITH…SASLITMFWS (65 aa). Residue Asn62 is glycosylated (N-linked (GlcNAc...) asparagine). Residues 97–117 traverse the membrane as a helical segment; it reads LSVSSFAVGGMIASFFGGLLG. The Cytoplasmic segment spans residues 118 to 122; it reads DKLGR. The chain crosses the membrane as a helical span at residues 123–143; sequence IKALLVANILSLVGALLMGFS. The Extracellular portion of the chain corresponds to 144 to 157; the sequence is KLGPSHILIISGRG. A helical membrane pass occupies residues 158–178; it reads ISGLYCGLISGLIPMYIGEIA. Residues 179 to 191 are Cytoplasmic-facing; the sequence is PTTLRGAIGALHQ. Residue Gln191 coordinates D-glucose. Residues 192–212 traverse the membrane as a helical segment; it reads LAIVTGILISQIVGLDFILGN. Topologically, residues 213–215 are extracellular; sequence HEL. A helical membrane pass occupies residues 216-236; that stretch reads WHILLGLSAVPAILQCLLLFF. The Cytoplasmic portion of the chain corresponds to 237 to 301; sequence CPESPRYLYI…LFTNASYRQP (65 aa). The helical transmembrane segment at 302–322 threads the bilayer; that stretch reads ILVALMLHAAQQFSGINGIFY. D-glucose-binding positions include 312–313 and Asn318; that span reads QQ. Over 323–336 the chain is Extracellular; sequence YSTSIFQTAGISQP. The chain crosses the membrane as a helical span at residues 337–357; that stretch reads VYATIGVGAVNTVFTAVSVFL. Asn347 contacts D-glucose. Residues 358–365 are Cytoplasmic-facing; it reads VEKAGRRS. A helical membrane pass occupies residues 366–386; the sequence is LFLIGMSGMFVCAIFMSVGLV. Residues 387–400 lie on the Extracellular side of the membrane; sequence LLSKFPWMNYVSMT. The helical transmembrane segment at 401–421 threads the bilayer; it reads AIFLFVSFFEIGPGPIPWFMV. The D-glucose site is built by Glu410 and Trp418. Topologically, residues 422 to 431 are cytoplasmic; the sequence is AEFFSQGPRP. A helical transmembrane segment spans residues 432-452; it reads AALAIAAFSNWTGNFIIALCF. Residues 453 to 454 lie on the Extracellular side of the membrane; it reads QY. A helical transmembrane segment spans residues 455 to 475; sequence IADFCGPYVFFLLLVWSWPLF. Over 476-510 the chain is Cytoplasmic; that stretch reads CSHFLKFQKPKENPLRKSQQSSERRGVQLKRQKLL. The interval 490–510 is disordered; the sequence is LRKSQQSSERRGVQLKRQKLL.

Belongs to the major facilitator superfamily. Sugar transporter (TC 2.A.1.1) family. Glucose transporter subfamily. N-glycosylated; required for stability and retention at the cell surface of pancreatic beta cells.

It is found in the cell membrane. The catalysed reaction is D-glucose(out) = D-glucose(in). The enzyme catalyses D-fructose(out) = D-fructose(in). It carries out the reaction L-dehydroascorbate(out) = L-dehydroascorbate(in). It catalyses the reaction D-galactose(in) = D-galactose(out). D-glucose and maltose competitively inhibit fructose transport. D-glucose, D-fructose and maltose inhibit deoxyglucose transport. In terms of biological role, facilitative hexose transporter that mediates the transport of glucose, fructose and galactose. Likely mediates the bidirectional transfer of glucose across the plasma membrane of hepatocytes and is responsible for uptake of glucose by the beta cells; may comprise part of the glucose-sensing mechanism of the beta cell. May also participate with the Na(+)/glucose cotransporter in the transcellular transport of glucose in the small intestine and kidney. Also able to mediate the transport of dehydroascorbate. The polypeptide is Solute carrier family 2, facilitated glucose transporter member 2 (Bos taurus (Bovine)).